The chain runs to 122 residues: Large ribosomal subunit protein uL14 (122 aa).

The protein belongs to the universal ribosomal protein uL14 family. As to quaternary structure, part of the 50S ribosomal subunit. Forms a cluster with proteins L3 and L19. In the 70S ribosome, L14 and L19 interact and together make contacts with the 16S rRNA in bridges B5 and B8.

In terms of biological role, binds to 23S rRNA. Forms part of two intersubunit bridges in the 70S ribosome. This Chromobacterium violaceum (strain ATCC 12472 / DSM 30191 / JCM 1249 / CCUG 213 / NBRC 12614 / NCIMB 9131 / NCTC 9757 / MK) protein is Large ribosomal subunit protein uL14.